The primary structure comprises 486 residues: Membrane-bound lytic murein transglycosylase F (486 aa).

Positions 1–26 are cleaved as a signal peptide; sequence MFSPMALRPRCAKWLIVTGLFLMLGA. The segment at 27–267 is non-LT domain; sequence CVEKPSTLER…RLKDRYYGHV (241 aa). The interval 268 to 486 is LT domain; it reads DVLGYVGAYT…TKPPEENPPL (219 aa). Residue Glu314 is part of the active site. Positions 464-486 are disordered; sequence VAEGNLHVPGVNKTKPPEENPPL.

In the N-terminal section; belongs to the bacterial solute-binding protein 3 family. The protein in the C-terminal section; belongs to the transglycosylase Slt family.

It is found in the cell outer membrane. The catalysed reaction is Exolytic cleavage of the (1-&gt;4)-beta-glycosidic linkage between N-acetylmuramic acid (MurNAc) and N-acetylglucosamine (GlcNAc) residues in peptidoglycan, from either the reducing or the non-reducing ends of the peptidoglycan chains, with concomitant formation of a 1,6-anhydrobond in the MurNAc residue.. In terms of biological role, murein-degrading enzyme that degrades murein glycan strands and insoluble, high-molecular weight murein sacculi, with the concomitant formation of a 1,6-anhydromuramoyl product. Lytic transglycosylases (LTs) play an integral role in the metabolism of the peptidoglycan (PG) sacculus. Their lytic action creates space within the PG sacculus to allow for its expansion as well as for the insertion of various structures such as secretion systems and flagella. The protein is Membrane-bound lytic murein transglycosylase F of Pseudomonas fluorescens (strain ATCC BAA-477 / NRRL B-23932 / Pf-5).